Consider the following 139-residue polypeptide: D-ribose pyranase (139 aa).

Catalysis depends on His-20, which acts as the Proton donor. Residues Asp-28, His-106, and 128–130 each bind substrate; that span reads YAN.

This sequence belongs to the RbsD / FucU family. RbsD subfamily. As to quaternary structure, homodecamer.

The protein resides in the cytoplasm. The enzyme catalyses beta-D-ribopyranose = beta-D-ribofuranose. It functions in the pathway carbohydrate metabolism; D-ribose degradation; D-ribose 5-phosphate from beta-D-ribopyranose: step 1/2. Its function is as follows. Catalyzes the interconversion of beta-pyran and beta-furan forms of D-ribose. The sequence is that of D-ribose pyranase from Escherichia coli O139:H28 (strain E24377A / ETEC).